Here is a 2130-residue protein sequence, read N- to C-terminus: Bromodomain adjacent to zinc finger domain protein 2B (2130 aa).

Disordered stretches follow at residues 1 to 42, 82 to 118, 151 to 293, 491 to 518, 543 to 633, 756 to 790, and 944 to 966; these read MESG…TGAA, LFAP…SLNG, GGRK…QKQP, KTTG…PVSN, VDSD…SSIG, EGRR…GSTE, and RKKA…LNKE. Residues 8–33 show a composition bias toward low complexity; it reads TSSSVSSTAAASSPVSSTPSVASAVS. Positions 183-206 are enriched in low complexity; that stretch reads ESSSNSDSDSGSSSDTSSEGISSS. Positions 207–234 are enriched in acidic residues; it reads DSDDLEEDEEEEEDQSAEESEDDESDSE. Residues 250-270 show a composition bias toward basic and acidic residues; sequence GVKDMKTDGQKAHEKSQEKRT. Over residues 272 to 283 the composition is skewed to polar residues; it reads QQIPLVSDSQTH. The segment covering 284–293 has biased composition (low complexity); the sequence is SSFQSQQKQP. A compositionally biased stretch (polar residues) spans 492 to 505; that stretch reads TTGNRTLVVPSTSP. A compositionally biased stretch (basic and acidic residues) spans 543-554; sequence VDSDAPSSKESD. The segment covering 555–611 has biased composition (acidic residues); that stretch reads DSNDDDDDDEDEDEDDEDDDSDDSQSESDSNSESDTDGSEDEDDEDDKDQDESDTDT. A compositionally biased stretch (low complexity) spans 623–633; sequence TGSSIKSSSIG. Residues 687–762 enclose the MBD domain; the sequence is VTDERELRVP…RAMEGRRGRP (76 aa). Basic and acidic residues predominate over residues 756 to 775; the sequence is EGRRGRPPNPDRQHSREESR. A coiled-coil region spans residues 797–984; sequence AKLLRKLQAQ…ELEMAKELKK (188 aa). Positions 1010 to 1075 constitute a DDT domain; sequence GSTFSDCLMI…VTAAVCDPGL (66 aa). 4 disordered regions span residues 1186-1265, 1431-1454, 1499-1545, and 1773-1795; these read TGKR…DQTV, SLCS…NLFS, VTHV…PFAM, and HKKH…ERKN. Residues 1220-1244 show a composition bias toward acidic residues; the sequence is SDYDDDDDDDSDDQADEDDEDEEDK. Residues 1245–1254 are compositionally biased toward basic and acidic residues; sequence EDKKGKKAEV. Pro residues predominate over residues 1514-1526; it reads SHPPSKSPSPVPS. The PHD-type zinc-finger motif lies at 1895–1945; that stretch reads KVYCQICRKGDNEELLLLCDGCDKGCHTYCHRPKITTIPDGDWFCPACIAK. The segment at 1957–2019 is disordered; sequence QIKGKKSNEQ…KQENFTAIKK (63 aa). Basic and acidic residues predominate over residues 1991 to 2002; it reads GKTEPKKRKMDE. Polar residues predominate over residues 2004–2014; that stretch reads VSVSQGKQENF. The Bromo domain maps to 2022–2126; it reads RDDSKDLAIC…KYFEKKWTEI (105 aa).

Belongs to the WAL family.

It is found in the nucleus. In terms of biological role, regulatory subunit of the ATP-dependent BRF-1 and BRF-5 ISWI chromatin remodeling complexes, which form ordered nucleosome arrays on chromatin and facilitate access to DNA during DNA-templated processes such as DNA replication, transcription, and repair. Both complexes regulate the spacing of nucleosomes along the chromatin and have the ability to slide mononucleosomes to the center of a DNA template. The BRF-1 ISWI chromatin remodeling complex has a lower ATP hydrolysis rate than the BRF-5 ISWI chromatin remodeling complex. Chromatin reader protein. Represses the expression of mitochondrial function-related genes, perhaps by transcriptional regulation. The protein is Bromodomain adjacent to zinc finger domain protein 2B (BAZ2B) of Gallus gallus (Chicken).